The following is a 650-amino-acid chain: Acetyl-coenzyme A synthetase (650 aa).

Residues 189-192 (RGGK), Thr-307, and Asn-331 each bind CoA. ATP is bound by residues 383-385 (GEP), 407-412 (DTWWQT), Asp-496, and Arg-511. A CoA-binding site is contributed by Ser-519. Position 522 (Arg-522) interacts with ATP. Positions 533, 535, and 538 each coordinate Mg(2+). A CoA-binding site is contributed by Arg-580. At Lys-605 the chain carries N6-acetyllysine.

This sequence belongs to the ATP-dependent AMP-binding enzyme family. Mg(2+) serves as cofactor. Acetylated. Deacetylation by the SIR2-homolog deacetylase activates the enzyme.

It catalyses the reaction acetate + ATP + CoA = acetyl-CoA + AMP + diphosphate. Its function is as follows. Catalyzes the conversion of acetate into acetyl-CoA (AcCoA), an essential intermediate at the junction of anabolic and catabolic pathways. AcsA undergoes a two-step reaction. In the first half reaction, AcsA combines acetate with ATP to form acetyl-adenylate (AcAMP) intermediate. In the second half reaction, it can then transfer the acetyl group from AcAMP to the sulfhydryl group of CoA, forming the product AcCoA. The sequence is that of Acetyl-coenzyme A synthetase from Syntrophobacter fumaroxidans (strain DSM 10017 / MPOB).